Here is a 357-residue protein sequence, read N- to C-terminus: UDP-N-acetylglucosamine--N-acetylmuramyl-(pentapeptide) pyrophosphoryl-undecaprenol N-acetylglucosamine transferase (357 aa).

Residues 15-17, asparagine 124, arginine 165, serine 191, and glutamine 285 contribute to the UDP-N-acetyl-alpha-D-glucosamine site; that span reads TGG.

It belongs to the glycosyltransferase 28 family. MurG subfamily.

It is found in the cell inner membrane. It carries out the reaction di-trans,octa-cis-undecaprenyl diphospho-N-acetyl-alpha-D-muramoyl-L-alanyl-D-glutamyl-meso-2,6-diaminopimeloyl-D-alanyl-D-alanine + UDP-N-acetyl-alpha-D-glucosamine = di-trans,octa-cis-undecaprenyl diphospho-[N-acetyl-alpha-D-glucosaminyl-(1-&gt;4)]-N-acetyl-alpha-D-muramoyl-L-alanyl-D-glutamyl-meso-2,6-diaminopimeloyl-D-alanyl-D-alanine + UDP + H(+). It functions in the pathway cell wall biogenesis; peptidoglycan biosynthesis. Functionally, cell wall formation. Catalyzes the transfer of a GlcNAc subunit on undecaprenyl-pyrophosphoryl-MurNAc-pentapeptide (lipid intermediate I) to form undecaprenyl-pyrophosphoryl-MurNAc-(pentapeptide)GlcNAc (lipid intermediate II). The polypeptide is UDP-N-acetylglucosamine--N-acetylmuramyl-(pentapeptide) pyrophosphoryl-undecaprenol N-acetylglucosamine transferase (Microcystis aeruginosa (strain NIES-843 / IAM M-2473)).